We begin with the raw amino-acid sequence, 286 residues long: 3-hydroxyanthranilate 3,4-dioxygenase (286 aa).

Residues 1–160 (MERCVRVKSW…SEQYRTGKPN (160 aa)) are domain A (catalytic). Arg-43 contacts O2. Fe cation-binding residues include His-47, Glu-53, and His-91. Position 53 (Glu-53) interacts with substrate. Residues Arg-95 and Glu-105 each contribute to the substrate site. The tract at residues 161 to 177 (PDQLLKEPPFPLSTRSV) is linker. A domain B region spans residues 178–286 (MEPMSLKAWL…QDPACKKPLG (109 aa)).

The protein belongs to the 3-HAO family. In terms of assembly, monomer. Fe(2+) serves as cofactor.

Its subcellular location is the cytoplasm. The protein resides in the cytosol. It carries out the reaction 3-hydroxyanthranilate + O2 = (2Z,4Z)-2-amino-3-carboxymuconate 6-semialdehyde. The protein operates within cofactor biosynthesis; NAD(+) biosynthesis; quinolinate from L-kynurenine: step 3/3. Catalyzes the oxidative ring opening of 3-hydroxyanthranilate to 2-amino-3-carboxymuconate semialdehyde, which spontaneously cyclizes to quinolinate. In Rattus norvegicus (Rat), this protein is 3-hydroxyanthranilate 3,4-dioxygenase (Haao).